The chain runs to 1119 residues: DNA-directed RNA polymerase subunit beta (1119 aa).

The protein belongs to the RNA polymerase beta chain family. In terms of assembly, the RNAP catalytic core consists of 2 alpha, 1 beta, 1 beta' and 1 omega subunit. When a sigma factor is associated with the core the holoenzyme is formed, which can initiate transcription.

It carries out the reaction RNA(n) + a ribonucleoside 5'-triphosphate = RNA(n+1) + diphosphate. Functionally, DNA-dependent RNA polymerase catalyzes the transcription of DNA into RNA using the four ribonucleoside triphosphates as substrates. This Thermus aquaticus protein is DNA-directed RNA polymerase subunit beta.